The chain runs to 200 residues: Ras-related protein Rab-10 (200 aa).

GTP-binding residues include Ser18, Gly19, Val20, Gly21, Lys22, Thr23, Cys24, Asn35, Thr36, Ser40, and Thr41. Residue Thr23 participates in Mg(2+) binding. 2 short sequence motifs (switch) span residues 32–46 (DAFN…GIDF) and 64–81 (DTAG…YYRG). 2 residues coordinate Mg(2+): Thr41 and Asp64. Gly67 contributes to the GTP binding site. Thr73 is modified (phosphothreonine; by LRRK2). Lys102 bears the N6-acetyllysine mark. Lys102 participates in a covalent cross-link: Glycyl lysine isopeptide (Lys-Gly) (interchain with G-Cter in ubiquitin). GTP is bound by residues Asn122, Lys123, Asp125, and Met126. A Glycyl lysine isopeptide (Lys-Gly) (interchain with G-Cter in ubiquitin) cross-link involves residue Lys136. Ser152, Ala153, and Lys154 together coordinate GTP. A Glycyl lysine isopeptide (Lys-Gly) (interchain with G-Cter in ubiquitin) cross-link involves residue Lys154. S-geranylgeranyl cysteine attachment occurs at residues Cys199 and Cys200.

The protein belongs to the small GTPase superfamily. Rab family. Interacts with MYO5A; mediates the transport to the plasma membrane of SLC2A4/GLUT4 storage vesicles. Interacts with GDI1 and with GDI2; negatively regulates RAB10 association with membranes and activation. Interacts (GDP-bound form) with LLGL1; the interaction is direct and promotes RAB10 association with membranes and activation through competition with the Rab inhibitor GDI1. Interacts with EXOC4; probably associates with the exocyst. Interacts (GTP-bound form) with MICALCL, MICAL1, MICAL3, EHBP1 and EHBP1L1; at least in case of MICAL1 two molecules of RAB10 can bind to one molecule of MICAL1. Interacts with TBC1D13. Interacts with SEC16A. Interacts with CHM and CHML. Interacts with LRRK2; interaction facilitates phosphorylation of Thr-73. Interacts (when phosphorylated on Thr-73) with RILPL1 and RILPL2. Interacts with TBC1D21. Interacts with MARCKS. The cofactor is Mg(2+). Post-translationally, ubiquitinated upon Legionella pneumophila infection. Ubiquitination does not lead to proteasomal degradation. Phosphorylation of Thr-73 in the switch II region by LRRK2 prevents the association of dRAB regulatory proteins, including CHM, CHML and RAB GDP dissociation inhibitors GDI1 and GDI2. Phosphorylation of Thr-73 by LRRK2 is stimulated by RAB29 and RAB32. Phosphorylation by LRRK2 is required for localization to stressed lysosomes. In terms of tissue distribution, expressed in the hippocampus. Expressed in neutrophils (at protein level). Expressed in the testis (at protein level).

Its subcellular location is the cytoplasmic vesicle membrane. It localises to the golgi apparatus membrane. It is found in the golgi apparatus. The protein resides in the trans-Golgi network membrane. The protein localises to the endosome membrane. Its subcellular location is the recycling endosome membrane. It localises to the cytoplasmic vesicle. It is found in the phagosome membrane. The protein resides in the cytoplasm. The protein localises to the cytoskeleton. Its subcellular location is the cilium basal body. It localises to the endoplasmic reticulum membrane. It is found in the perinuclear region. The protein resides in the lysosome. It catalyses the reaction GTP + H2O = GDP + phosphate + H(+). Regulated by guanine nucleotide exchange factors (GEFs) DENND4C and RABIF which promote the exchange of bound GDP for free GTP. Regulated by GTPase activating proteins (GAPs) including TBC1D21 which increase the GTP hydrolysis activity. Inhibited by GDP dissociation inhibitors GDI1 and GDI2 which prevent Rab-GDP dissociation. Functionally, the small GTPases Rab are key regulators of intracellular membrane trafficking, from the formation of transport vesicles to their fusion with membranes. Rabs cycle between an inactive GDP-bound form and an active GTP-bound form that is able to recruit to membranes different set of downstream effectors directly responsible for vesicle formation, movement, tethering and fusion. That Rab is mainly involved in the biosynthetic transport of proteins from the Golgi to the plasma membrane. Regulates, for instance, SLC2A4/GLUT4 glucose transporter-enriched vesicles delivery to the plasma membrane. In parallel, it regulates the transport of TLR4, a toll-like receptor to the plasma membrane and therefore may be important for innate immune response. Also plays a specific role in asymmetric protein transport to the plasma membrane. In neurons, it is involved in axonogenesis through regulation of vesicular membrane trafficking toward the axonal plasma membrane. In epithelial cells, it regulates transport from the Golgi to the basolateral membrane. May play a role in the basolateral recycling pathway and in phagosome maturation. May play a role in endoplasmic reticulum dynamics and morphology controlling tubulation along microtubules and tubules fusion. Together with LRRK2, RAB8A, and RILPL1, it regulates ciliogenesis. When phosphorylated by LRRK2 on Thr-73, binds RILPL1 and inhibits ciliogenesis. Participates in the export of a subset of neosynthesized proteins through a Rab8-Rab10-Rab11-dependent endososomal export route. Targeted to and stabilized on stressed lysosomes through LRRK2 phosphorylation where it promotes the extracellular release of lysosomal content through EHBP1 and EHNP1L1 effector proteins. (Microbial infection) Upon Legionella pneumophila infection promotes endoplasmic reticulum recruitment and bacterial replication. Plays a role in remodeling the Legionella-containing vacuole (LCV) into an endoplasmic reticulum-like vacuole. This chain is Ras-related protein Rab-10, found in Homo sapiens (Human).